The sequence spans 550 residues: Hydroxylamine reductase (550 aa).

Residues cysteine 3, cysteine 6, cysteine 18, and cysteine 25 each coordinate [2Fe-2S] cluster. Hybrid [4Fe-2O-2S] cluster contacts are provided by histidine 249, glutamate 273, cysteine 317, cysteine 405, cysteine 433, cysteine 458, glutamate 492, and lysine 494. Cysteine persulfide is present on cysteine 405.

The protein belongs to the HCP family. The cofactor is [2Fe-2S] cluster. It depends on hybrid [4Fe-2O-2S] cluster as a cofactor.

The protein resides in the cytoplasm. It catalyses the reaction A + NH4(+) + H2O = hydroxylamine + AH2 + H(+). In terms of biological role, catalyzes the reduction of hydroxylamine to form NH(3) and H(2)O. This Yersinia pseudotuberculosis serotype O:1b (strain IP 31758) protein is Hydroxylamine reductase.